We begin with the raw amino-acid sequence, 396 residues long: Bone morphogenetic protein 2 (396 aa).

The first 23 residues, 1 to 23 (MVAGTRCLLALLLPQVLLGGAAG), serve as a signal peptide directing secretion. A propeptide spans 24 to 282 (LIPELGRRKF…GHPLHRREKR (259 aa)) (cleaved by PCSK5). Residue Ser-87 is modified to Phosphoserine. Residues Asn-135, Asn-163, Asn-164, and Asn-200 are each glycosylated (N-linked (GlcNAc...) asparagine). The disordered stretch occupies residues 272 to 293 (KGHPLHRREKRQAKHKQRKRLK). Over residues 274–293 (HPLHRREKRQAKHKQRKRLK) the composition is skewed to basic residues. 3 disulfide bridges follow: Cys-296–Cys-361, Cys-325–Cys-393, and Cys-329–Cys-395. A glycan (N-linked (GlcNAc...) asparagine) is linked at Asn-338.

It belongs to the TGF-beta family. Homodimer; disulfide-linked. Interacts with SOSTDC1. Interacts with GREM2, RGMA, RGMB and RGMC. Interacts with ASPN. Interacts with MAFP5. Interacts with FBN1 (via N-terminal domain) and FBN2. Interacts with type I receptor BMPR1A. Interacts with type II receptor BMPR2. Interacts with ERFE. Interacts with BMPR1A/ALK3; the interaction may induce HAMP expression. Interacts with TGFBR3.

The protein resides in the secreted. Functionally, growth factor of the TGF-beta superfamily that plays essential roles in many developmental processes, including cardiogenesis, neurogenesis, and osteogenesis. Induces cartilage and bone formation. Initiates the canonical BMP signaling cascade by associating with type I receptor BMPR1A and type II receptor BMPR2. Once all three components are bound together in a complex at the cell surface, BMPR2 phosphorylates and activates BMPR1A. In turn, BMPR1A propagates signal by phosphorylating SMAD1/5/8 that travel to the nucleus and act as activators and repressors of transcription of target genes. Also acts to promote expression of HAMP, via the interaction with its receptor BMPR1A/ALK3. Can also signal through non-canonical pathways such as ERK/MAP kinase signaling cascade that regulates osteoblast differentiation. Also stimulates the differentiation of myoblasts into osteoblasts via the EIF2AK3-EIF2A-ATF4 pathway by stimulating EIF2A phosphorylation which leads to increased expression of ATF4 which plays a central role in osteoblast differentiation. Acts as a positive regulator of odontoblast differentiation during mesenchymal tooth germ formation, expression is repressed during the bell stage by MSX1-mediated inhibition of CTNNB1 signaling. The polypeptide is Bone morphogenetic protein 2 (BMP2) (Dama dama (Fallow deer)).